We begin with the raw amino-acid sequence, 295 residues long: Protoheme IX farnesyltransferase 2 (295 aa).

9 consecutive transmembrane segments (helical) span residues 9 to 29 (ITKP…FFLA), 36 to 56 (FALF…GCVF), 83 to 103 (LTLA…LLYV), 108 to 128 (LSAF…SLWL), 135 to 155 (GTLV…CAVS), 163 to 183 (VTLL…IAIF), 209 to 229 (IVLY…GGYA), 230 to 250 (GLGY…MAWG), and 264 to 284 (VFGF…VDSQ).

The protein belongs to the UbiA prenyltransferase family. Protoheme IX farnesyltransferase subfamily.

The protein resides in the cell inner membrane. It carries out the reaction heme b + (2E,6E)-farnesyl diphosphate + H2O = Fe(II)-heme o + diphosphate. It participates in porphyrin-containing compound metabolism; heme O biosynthesis; heme O from protoheme: step 1/1. In terms of biological role, converts heme B (protoheme IX) to heme O by substitution of the vinyl group on carbon 2 of heme B porphyrin ring with a hydroxyethyl farnesyl side group. The protein is Protoheme IX farnesyltransferase 2 of Pseudomonas putida (strain W619).